Reading from the N-terminus, the 232-residue chain is Orotidine 5'-phosphate decarboxylase (232 aa).

Substrate-binding positions include D11, K32, 59 to 68 (DLKLHDIPHT), T116, R178, Q188, G208, and R209. Residue K61 is the Proton donor of the active site.

The protein belongs to the OMP decarboxylase family. Type 1 subfamily. As to quaternary structure, homodimer.

The catalysed reaction is orotidine 5'-phosphate + H(+) = UMP + CO2. The protein operates within pyrimidine metabolism; UMP biosynthesis via de novo pathway; UMP from orotate: step 2/2. Its function is as follows. Catalyzes the decarboxylation of orotidine 5'-monophosphate (OMP) to uridine 5'-monophosphate (UMP). The protein is Orotidine 5'-phosphate decarboxylase of Synechococcus sp. (strain JA-3-3Ab) (Cyanobacteria bacterium Yellowstone A-Prime).